Here is a 208-residue protein sequence, read N- to C-terminus: Negative modulator of initiation of replication (208 aa).

The tract at residues 115–116 (AV) is interaction with DNA.

This sequence belongs to the SeqA family. Homodimer. Polymerizes to form helical filaments.

It localises to the cytoplasm. Functionally, negative regulator of replication initiation, which contributes to regulation of DNA replication and ensures that replication initiation occurs exactly once per chromosome per cell cycle. Binds to pairs of hemimethylated GATC sequences in the oriC region, thus preventing assembly of replication proteins and re-initiation at newly replicated origins. Repression is relieved when the region becomes fully methylated. This chain is Negative modulator of initiation of replication, found in Shewanella frigidimarina (strain NCIMB 400).